We begin with the raw amino-acid sequence, 292 residues long: Protease HtpX (292 aa).

The next 2 membrane-spanning stretches (helical) occupy residues 5–25 (VVLFLLTNFAVLILAGIVMSV) and 35–55 (GLLVMAAIFGFGGSFISLLLS). His140 serves as a coordination point for Zn(2+). Glu141 is a catalytic residue. His144 lines the Zn(2+) pocket. The next 2 membrane-spanning stretches (helical) occupy residues 155–175 (LLQGVLNTFVIVLARVVGGII) and 193–213 (IIVFVLEMVFGLFATMIAMWF). Glu218 provides a ligand contact to Zn(2+).

This sequence belongs to the peptidase M48B family. It depends on Zn(2+) as a cofactor.

It is found in the cell inner membrane. The chain is Protease HtpX from Xanthomonas campestris pv. campestris (strain 8004).